Reading from the N-terminus, the 333-residue chain is MDLINSTDYLINASTLVRNSTQFLAPASKMIIALSLYISSIIGTITNGLYLWVLRFKMKQTVNTLLFFHLILSYFISTMILPFMATSQLQDNHWNFGTALCKVFNGTLSLGMFTSVFFLSAIGLDRYLLTLHPVWSQQHRTPRWASSIVLGVWISAAALSIPYLIFRQTHHDRKGKVTCQNNYAVSTNWESKEMQALRQWIHVACFISRFLLGFLLPFFIIIFCYERVASKVKERSLFKSSKPFKVMMTAIISFFVCWMPYHIHQGLLLTTNQSLLLELTLILTVLTTSFNTIFSPTLYLFVGENFKKVFKKSILALFESTFSEDSSVERTQT.

Over 1–30 (MDLINSTDYLINASTLVRNSTQFLAPASKM) the chain is Extracellular. Asparagine 5, asparagine 12, and asparagine 19 each carry an N-linked (GlcNAc...) asparagine glycan. The chain crosses the membrane as a helical span at residues 31-53 (IIALSLYISSIIGTITNGLYLWV). Over 54 to 64 (LRFKMKQTVNT) the chain is Cytoplasmic. A helical transmembrane segment spans residues 65–86 (LLFFHLILSYFISTMILPFMAT). At 87 to 103 (SQLQDNHWNFGTALCKV) the chain is on the extracellular side. Cysteine 101 and cysteine 179 are disulfide-bonded. The helical transmembrane segment at 104–124 (FNGTLSLGMFTSVFFLSAIGL) threads the bilayer. Residues 125 to 143 (DRYLLTLHPVWSQQHRTPR) are Cytoplasmic-facing. A helical membrane pass occupies residues 144 to 165 (WASSIVLGVWISAAALSIPYLI). Over 166-209 (FRQTHHDRKGKVTCQNNYAVSTNWESKEMQALRQWIHVACFISR) the chain is Extracellular. A helical transmembrane segment spans residues 210-230 (FLLGFLLPFFIIIFCYERVAS). Over 231–246 (KVKERSLFKSSKPFKV) the chain is Cytoplasmic. A helical transmembrane segment spans residues 247–268 (MMTAIISFFVCWMPYHIHQGLL). Residues 269–283 (LTTNQSLLLELTLIL) are Extracellular-facing. N-linked (GlcNAc...) asparagine glycosylation is present at asparagine 272. Residues 284–303 (TVLTTSFNTIFSPTLYLFVG) form a helical membrane-spanning segment. Topologically, residues 304 to 333 (ENFKKVFKKSILALFESTFSEDSSVERTQT) are cytoplasmic.

This sequence belongs to the G-protein coupled receptor 1 family.

It localises to the cell membrane. Functionally, orphan receptor; could be a chemoattractant receptor. The chain is Probable G-protein coupled receptor 33 (GPR33) from Pan troglodytes (Chimpanzee).